Consider the following 1124-residue polypeptide: Eukaryotic translation initiation factor 3 subunit A (1124 aa).

A coiled-coil region spans residues 96–124 (LKMAEERTEQAQQQSSQATVDIDDLDNLA). The PCI domain maps to 317 to 498 (IQRMTTHVLI…ECVHFGTDLS (182 aa)). 2 stretches are compositionally biased toward basic and acidic residues: residues 812–851 (EERR…RQLA) and 860–883 (EVER…ERRP). Residues 812 to 1124 (EERRRIEEEL…EEGWTDVKHR (313 aa)) form a disordered region. A compositionally biased stretch (low complexity) spans 900-910 (PAAAAPANPAA). Composition is skewed to basic and acidic residues over residues 928-952 (PRER…EKDG), 960-990 (RGGD…DRGP), 1007-1048 (PRRD…RGGG), and 1063-1100 (DDNR…EARP).

Belongs to the eIF-3 subunit A family. Component of the eukaryotic translation initiation factor 3 (eIF-3) complex.

The protein resides in the cytoplasm. RNA-binding component of the eukaryotic translation initiation factor 3 (eIF-3) complex, which is involved in protein synthesis of a specialized repertoire of mRNAs and, together with other initiation factors, stimulates binding of mRNA and methionyl-tRNAi to the 40S ribosome. The eIF-3 complex specifically targets and initiates translation of a subset of mRNAs involved in cell proliferation. The protein is Eukaryotic translation initiation factor 3 subunit A of Anopheles gambiae (African malaria mosquito).